Reading from the N-terminus, the 312-residue chain is 4-diphosphocytidyl-2-C-methyl-D-erythritol kinase (312 aa).

The active site involves K18. 104 to 114 (PIAGGMGGGSA) contacts ATP. D146 is an active-site residue.

It belongs to the GHMP kinase family. IspE subfamily.

It carries out the reaction 4-CDP-2-C-methyl-D-erythritol + ATP = 4-CDP-2-C-methyl-D-erythritol 2-phosphate + ADP + H(+). Its pathway is isoprenoid biosynthesis; isopentenyl diphosphate biosynthesis via DXP pathway; isopentenyl diphosphate from 1-deoxy-D-xylulose 5-phosphate: step 3/6. Functionally, catalyzes the phosphorylation of the position 2 hydroxy group of 4-diphosphocytidyl-2C-methyl-D-erythritol. This Clavibacter michiganensis subsp. michiganensis (strain NCPPB 382) protein is 4-diphosphocytidyl-2-C-methyl-D-erythritol kinase.